We begin with the raw amino-acid sequence, 409 residues long: Nitrogen permease regulator 2 homolog (409 aa).

The protein belongs to the NPR2 family.

It localises to the cytoplasm. It is found in the nucleus. Mediates inactivation of the TORC1 complex in response to amino acid starvation. Post-transcriptional regulator of nitrogen permeases. This chain is Nitrogen permease regulator 2 homolog, found in Schizosaccharomyces pombe (strain 972 / ATCC 24843) (Fission yeast).